The following is a 304-amino-acid chain: tRNA dimethylallyltransferase (304 aa).

2-9 lines the ATP pocket; that stretch reads GPTASGKT. 4-9 serves as a coordination point for substrate; sequence TASGKT. The segment at 28 to 31 is interaction with substrate tRNA; the sequence is DSAL.

The protein belongs to the IPP transferase family. Monomer. Mg(2+) serves as cofactor.

The enzyme catalyses adenosine(37) in tRNA + dimethylallyl diphosphate = N(6)-dimethylallyladenosine(37) in tRNA + diphosphate. Functionally, catalyzes the transfer of a dimethylallyl group onto the adenine at position 37 in tRNAs that read codons beginning with uridine, leading to the formation of N6-(dimethylallyl)adenosine (i(6)A). This chain is tRNA dimethylallyltransferase, found in Blochmanniella pennsylvanica (strain BPEN).